We begin with the raw amino-acid sequence, 261 residues long: Kallikrein 1-related peptidase b3 (261 aa).

A signal peptide spans 1–18; that stretch reads MWFLILFLALSLGGIDAA. The propeptide at 19–24 is activation peptide; sequence PPVQSR. The interval 25–107 is segment B1; sequence IVGGFKCEKN…HPGFNMSLMR (83 aa). Residues 25 to 258 form the Peptidase S1 domain; sequence IVGGFKCEKN…FTSWIKDTMA (234 aa). Disulfide bonds link Cys-31-Cys-173, Cys-50-Cys-66, Cys-152-Cys-219, Cys-184-Cys-198, and Cys-209-Cys-234. Catalysis depends on His-65, which acts as the Charge relay system. Asn-102 is a glycosylation site (N-linked (GlcNAc...) asparagine). The segment at 112 to 164 is segment C; sequence FLEYDYSNDLMLLRLSKPADITDTVKPITLPTEEPKLGSTCLASGWGSITPTK. Residues 112–261 are segment A; that stretch reads FLEYDYSNDL…WIKDTMAKNP (150 aa). Asp-120 functions as the Charge relay system in the catalytic mechanism. The segment B2 stretch occupies residues 165-261; it reads FQFTDDLYCV…WIKDTMAKNP (97 aa). The active-site Charge relay system is the Ser-213. The Zn(2+) site is built by His-231 and Glu-236.

It belongs to the peptidase S1 family. Kallikrein subfamily. In terms of assembly, 7S nerve growth factor is composed of two alpha chains, a beta dimer composed of identical chains, and two gamma chains. Requires Zn(2+) as cofactor.

The catalysed reaction is Preferential cleavage of Arg-|-Xaa bonds in small molecule substrates. Highly selective action to release kallidin (lysyl-bradykinin) from kininogen involves hydrolysis of Met-|-Xaa or Leu-|-Xaa.. 7S NGF alpha chain stabilizes the 7S complex. The beta dimer promotes neurite growth. The gamma chain is an arginine-specific protease; it may also have plasminogen activator activity, as well as mitogenic activity for chick embryo fibroblasts. The sequence is that of Kallikrein 1-related peptidase b3 (Klk1b3) from Mus musculus (Mouse).